We begin with the raw amino-acid sequence, 51 residues long: Proteinase inhibitor PTI (51 aa).

Disulfide bonds link cysteine 3/cysteine 40, cysteine 6/cysteine 24, cysteine 7/cysteine 36, and cysteine 13/cysteine 49.

Belongs to the protease inhibitor I20 (potato type II proteinase inhibitor) family.

It localises to the secreted. In Solanum tuberosum (Potato), this protein is Proteinase inhibitor PTI.